Consider the following 77-residue polypeptide: Acyl carrier protein (77 aa).

The 75-residue stretch at 1–75 folds into the Carrier domain; the sequence is MVFEKVKDII…DVVNYIKAHT (75 aa). At serine 35 the chain carries O-(pantetheine 4'-phosphoryl)serine.

The protein belongs to the acyl carrier protein (ACP) family. 4'-phosphopantetheine is transferred from CoA to a specific serine of apo-ACP by AcpS. This modification is essential for activity because fatty acids are bound in thioester linkage to the sulfhydryl of the prosthetic group.

The protein localises to the cytoplasm. It functions in the pathway lipid metabolism; fatty acid biosynthesis. In terms of biological role, carrier of the growing fatty acid chain in fatty acid biosynthesis. This Clostridium acetobutylicum (strain ATCC 824 / DSM 792 / JCM 1419 / IAM 19013 / LMG 5710 / NBRC 13948 / NRRL B-527 / VKM B-1787 / 2291 / W) protein is Acyl carrier protein.